The following is a 186-amino-acid chain: Ras-related protein rapA (186 aa).

GTP is bound at residue 12 to 19 (GSGGVGKS). Positions 34-42 (YDPTIEDSY) match the Effector region motif. Residues 59–63 (DTAGT) and 118–121 (NKCD) contribute to the GTP site. Cysteine methyl ester is present on Cys183. A lipid anchor (S-geranylgeranyl cysteine) is attached at Cys183. Residues 184–186 (ALL) constitute a propeptide, removed in mature form.

The protein belongs to the small GTPase superfamily. Ras family. Interacts with ralGDS (only when rapA is in its GTP-bound state). Interacts with the Rap guanine nucleotide exchange factor glfB.

It localises to the cell membrane. The catalysed reaction is GTP + H2O = GDP + phosphate + H(+). Functionally, g protein of the Ras family that positively regulates phagocytosis and negatively regulates macropinocytosis. May be involved in the activation of guanylyl cyclase during the response to hyperosmotic conditions. Overexpressing cells generate alterations in cell shape and contractile responses. Involved in chemotaxis via regulation of the balance of Ras and Rap signaling at the leading edge of chemotaxing cells. In Dictyostelium discoideum (Social amoeba), this protein is Ras-related protein rapA (rapA).